The sequence spans 346 residues: Actin-like protein 10 (346 aa).

Belongs to the actin family.

The protein is Actin-like protein 10 (Actl10) of Mus musculus (Mouse).